We begin with the raw amino-acid sequence, 439 residues long: Adenylosuccinate synthetase (439 aa).

GTP-binding positions include 25–31 (GDEGKGK), 53–55 (GHT), and K62. D26 functions as the Proton acceptor in the catalytic mechanism. D26 and G53 together coordinate Mg(2+). IMP contacts are provided by residues 26 to 29 (DEGK) and 51 to 54 (NAGH). The Proton donor role is filled by H54. Residues T141, R155, N232, and T247 each coordinate IMP. Residue T307 participates in GTP binding. 307–313 (TTTNRPR) is a binding site for substrate. R311 is a binding site for IMP. GTP contacts are provided by residues R313, 339-341 (KLD), and 425-427 (GVG).

The protein belongs to the adenylosuccinate synthetase family. Homodimer. The cofactor is Mg(2+).

The protein localises to the cytoplasm. The enzyme catalyses IMP + L-aspartate + GTP = N(6)-(1,2-dicarboxyethyl)-AMP + GDP + phosphate + 2 H(+). Its pathway is purine metabolism; AMP biosynthesis via de novo pathway; AMP from IMP: step 1/2. In terms of biological role, plays an important role in the salvage pathway for purine nucleotide biosynthesis. Catalyzes the first commited step in the biosynthesis of AMP from IMP. This Plasmodium chabaudi chabaudi protein is Adenylosuccinate synthetase.